Consider the following 202-residue polypeptide: Small ribosomal subunit protein uS4c (202 aa).

The region spanning 90–158 is the S4 RNA-binding domain; sequence MRLDNIIFRL…ITKNIELSQK (69 aa).

This sequence belongs to the universal ribosomal protein uS4 family. Part of the 30S ribosomal subunit. Contacts protein S5. The interaction surface between S4 and S5 is involved in control of translational fidelity.

The protein resides in the plastid. It is found in the chloroplast. Its function is as follows. One of the primary rRNA binding proteins, it binds directly to 16S rRNA where it nucleates assembly of the body of the 30S subunit. In terms of biological role, with S5 and S12 plays an important role in translational accuracy. This Marchantia romanica (Liverwort) protein is Small ribosomal subunit protein uS4c (rps4).